The chain runs to 164 residues: C-phycoerythrin alpha chain (164 aa).

Residues Cys82 and Cys139 each coordinate (2R,3E)-phycoerythrobilin.

It belongs to the phycobiliprotein family. As to quaternary structure, heterodimer of an alpha and a beta chain. In terms of processing, contains two covalently linked bilin chromophores.

The protein localises to the cellular thylakoid membrane. Functionally, light-harvesting photosynthetic bile pigment-protein from the phycobiliprotein complex. This chain is C-phycoerythrin alpha chain (cpeA), found in Pseudanabaena tenuis (strain PCC 7409).